The following is a 486-amino-acid chain: Protein nucleotidyltransferase YdiU (486 aa).

ATP is bound by residues Gly-90, Gly-92, Arg-93, Lys-113, Asp-125, Gly-126, Arg-176, and Arg-183. Catalysis depends on Asp-252, which acts as the Proton acceptor. The Mg(2+) site is built by Asn-253 and Asp-262. Position 262 (Asp-262) interacts with ATP.

The protein belongs to the SELO family. Mg(2+) is required as a cofactor. Requires Mn(2+) as cofactor.

It carries out the reaction L-seryl-[protein] + ATP = 3-O-(5'-adenylyl)-L-seryl-[protein] + diphosphate. It catalyses the reaction L-threonyl-[protein] + ATP = 3-O-(5'-adenylyl)-L-threonyl-[protein] + diphosphate. The enzyme catalyses L-tyrosyl-[protein] + ATP = O-(5'-adenylyl)-L-tyrosyl-[protein] + diphosphate. The catalysed reaction is L-histidyl-[protein] + UTP = N(tele)-(5'-uridylyl)-L-histidyl-[protein] + diphosphate. It carries out the reaction L-seryl-[protein] + UTP = O-(5'-uridylyl)-L-seryl-[protein] + diphosphate. It catalyses the reaction L-tyrosyl-[protein] + UTP = O-(5'-uridylyl)-L-tyrosyl-[protein] + diphosphate. Functionally, nucleotidyltransferase involved in the post-translational modification of proteins. It can catalyze the addition of adenosine monophosphate (AMP) or uridine monophosphate (UMP) to a protein, resulting in modifications known as AMPylation and UMPylation. The chain is Protein nucleotidyltransferase YdiU from Pseudomonas aeruginosa (strain LESB58).